We begin with the raw amino-acid sequence, 368 residues long: tRNA-specific 2-thiouridylase MnmA (368 aa).

ATP contacts are provided by residues 11-18 (GMSGGVDS) and M37. Residues 97–99 (NPD) form an interaction with target base in tRNA region. Catalysis depends on C102, which acts as the Nucleophile. Cysteines 102 and 199 form a disulfide. Residue G127 participates in ATP binding. The interaction with tRNA stretch occupies residues 149-151 (KDQ). Residue C199 is the Cysteine persulfide intermediate of the active site. The tract at residues 311 to 312 (RY) is interaction with tRNA.

This sequence belongs to the MnmA/TRMU family. As to quaternary structure, interacts with TusE.

It is found in the cytoplasm. It carries out the reaction S-sulfanyl-L-cysteinyl-[protein] + uridine(34) in tRNA + AH2 + ATP = 2-thiouridine(34) in tRNA + L-cysteinyl-[protein] + A + AMP + diphosphate + H(+). Catalyzes the 2-thiolation of uridine at the wobble position (U34) of tRNA(Lys), tRNA(Glu) and tRNA(Gln), leading to the formation of s(2)U34, the first step of tRNA-mnm(5)s(2)U34 synthesis. Sulfur is provided by IscS, via a sulfur-relay system. Binds ATP and its substrate tRNAs. The chain is tRNA-specific 2-thiouridylase MnmA from Shigella flexneri serotype 5b (strain 8401).